Here is a 515-residue protein sequence, read N- to C-terminus: MHTPPDTGMAGKPFRATYIWTNIINNLQTQVEVKRRRHNLKIYPDCFLGSEAVDVVLAHIIQSKVCGDAEVPRFKAVRLCQALMEARVFEAVDTKVFGKEKRQAKFEDSSCSLYRFLNRQTPSTSGSETIGSGYNTQRNTNSPPFQRMEDSAYSNNSPVKTDKSLEDVLGNLNMNTTITPQMMNLGLSQELMDEIWRQQTVLRLLQLIELPLLESLLEGQESPRPPLHSMDSDPDLLYTSSYLDREILKAFSEAQADSWLSAAVDCQEFLPDQLVVDVSRGLAKCEEETSQYKQLLYGVLVQHYGQSDYPPLLTNHVFDIHSGVSELLVNGKCEQALESLQLCLKLQDSRSREELRRLLRFMALAGSPHQIKLHKEIENRMAVKRAFSNAIVYGTKLAKGKVDLLVLFMMDKHHDLFKIPVTLHKLVSDKLASIIKGTDPDRITGTTYCRHLSGKEFVETVQKTTREELWTLLKTIHENTKLSLKEKRRLLGQFYKGHPEIFVQYFGNRISNIYI.

Positions 27 to 118 constitute a DEP domain; it reads LQTQVEVKRR…SSCSLYRFLN (92 aa). The span at 121-144 shows a compositional bias: polar residues; that stretch reads TPSTSGSETIGSGYNTQRNTNSPP. Positions 121 to 160 are disordered; sequence TPSTSGSETIGSGYNTQRNTNSPPFQRMEDSAYSNNSPVK.

This sequence belongs to the DEPDC7 family.

The polypeptide is DEP domain-containing protein 7 (depdc7) (Danio rerio (Zebrafish)).